The primary structure comprises 489 residues: Rhamnulokinase (489 aa).

13–17 (ASSGR) lines the ATP pocket. Cys-68 and Cys-222 are oxidised to a cystine. Substrate is bound by residues Gly-83 and 236 to 238 (HDT). The active-site Proton acceptor is the Asp-237. Thr-259 provides a ligand contact to ATP. Asn-296 contacts substrate. Gln-304 lines the ATP pocket. A disulfide bond links Cys-353 and Cys-370. Gly-402 lines the ATP pocket. An intrachain disulfide couples Cys-413 to Cys-417.

Belongs to the rhamnulokinase family. It depends on Mg(2+) as a cofactor.

The enzyme catalyses L-rhamnulose + ATP = L-rhamnulose 1-phosphate + ADP + H(+). The protein operates within carbohydrate degradation; L-rhamnose degradation; glycerone phosphate from L-rhamnose: step 2/3. Its function is as follows. Involved in the catabolism of L-rhamnose (6-deoxy-L-mannose). Catalyzes the transfer of the gamma-phosphate group from ATP to the 1-hydroxyl group of L-rhamnulose to yield L-rhamnulose 1-phosphate. This is Rhamnulokinase from Salmonella agona (strain SL483).